Reading from the N-terminus, the 824-residue chain is Protein bicaudal D homolog 2 (824 aa).

Residue Ser-2 is modified to N-acetylserine. Residues 20–269 (EWLRAEVKRL…ELSHYMSIND (250 aa)) are a coiled coil. The tract at residues 25-398 (EVKRLSHELA…RLTENLSALR (374 aa)) is interacts with DYNLL1, DYNC1H1, DYNC1I2, DCTN1 and DCTN2. Phosphoserine occurs at positions 190, 224, and 318. Residues 311–330 (LPLDNKTSTPKKEGLAPPSP) are disordered. At Thr-319 the chain carries Phosphothreonine. Positions 334 to 599 (SDLLSELNIS…LLAPEAGRAD (266 aa)) are interaction with KIF5A. Residues 338–537 (SELNISEIQK…VTFSEELANL (200 aa)) are a coiled coil. Residues Ser-343 and Ser-395 each carry the phosphoserine modification. Disordered regions lie at residues 398–425 (RRLQ…GDYY), 559–622 (EGQG…DPRR), and 804–824 (EQTR…TPSL). Over residues 402–422 (ASKERQTALDNEKDRDSHEDG) the composition is skewed to basic and acidic residues. Residues Ser-568, Ser-574, and Ser-582 each carry the phosphoserine modification. The segment at 590 to 824 (LLAPEAGRAD…PKTKPATPSL (235 aa)) is interaction with RANBP2. Thr-602 carries the post-translational modification Phosphothreonine. Residues 604–618 (DSSPSPGSSLPSPLS) are compositionally biased toward low complexity. Positions 666–808 (DKDKEALMEE…LELDHEQTRR (143 aa)) form a coiled coil. Residues 666–814 (DKDKEALMEE…QTRRGRAKAA (149 aa)) are interacts with RAB6A. At Thr-821 the chain carries Phosphothreonine. Position 823 is a phosphoserine (Ser-823).

Belongs to the BicD family. Part of a tripartite complex with dynein and dynactin, acts an adapter linking the dynein motor complex and dynactin. Interacts with CPNE4 (via VWFA domain). Interacts with RAB6A. Interacts with NEK9. Interacts with DNAI1. Interacts with DYNC1H1. Interacts with RANBP2. Binds preferentially to tyrosinated microtubules than to detyrosinated microtubules. Interacts with DYNLL1, DYNC1I2; DCTN1, DCTN2 and KIF5A. Interacts with KIF1C. In terms of processing, phosphorylated by NEK9 in vitro. As to expression, ubiquitous.

Its subcellular location is the golgi apparatus. The protein resides in the cytoplasm. The protein localises to the cytoskeleton. It localises to the nucleus envelope. It is found in the nucleus. Its subcellular location is the nuclear pore complex. Its function is as follows. Acts as an adapter protein linking the dynein motor complex to various cargos and converts dynein from a non-processive to a highly processive motor in the presence of dynactin. Facilitates and stabilizes the interaction between dynein and dynactin and activates dynein processivity (the ability to move along a microtubule for a long distance without falling off the track). Facilitates the binding of RAB6A to the Golgi by stabilizing its GTP-bound form. Regulates coat complex coatomer protein I (COPI)-independent Golgi-endoplasmic reticulum transport via its interaction with RAB6A and recruitment of the dynein-dynactin motor complex. Contributes to nuclear and centrosomal positioning prior to mitotic entry through regulation of both dynein and kinesin-1. During G2 phase of the cell cycle, associates with RANBP2 at the nuclear pores and recruits dynein and dynactin to the nuclear envelope to ensure proper positioning of the nucleus relative to centrosomes prior to the onset of mitosis. The sequence is that of Protein bicaudal D homolog 2 from Homo sapiens (Human).